A 209-amino-acid chain; its full sequence is Kynurenine formamidase (209 aa).

Residue Trp20 coordinates substrate. 3 residues coordinate Zn(2+): His50, His54, and Asp56. The active-site Proton donor/acceptor is the His60. 2 residues coordinate Zn(2+): His161 and Glu173.

The protein belongs to the Cyclase 1 superfamily. KynB family. As to quaternary structure, homodimer. The cofactor is Zn(2+).

The catalysed reaction is N-formyl-L-kynurenine + H2O = L-kynurenine + formate + H(+). It participates in amino-acid degradation; L-tryptophan degradation via kynurenine pathway; L-kynurenine from L-tryptophan: step 2/2. Catalyzes the hydrolysis of N-formyl-L-kynurenine to L-kynurenine, the second step in the kynurenine pathway of tryptophan degradation. This Bacillus thuringiensis subsp. konkukian (strain 97-27) protein is Kynurenine formamidase.